Here is an 875-residue protein sequence, read N- to C-terminus: Importin subunit beta-1 (875 aa).

The residue at position 1 (methionine 1) is an N-acetylmethionine. HEAT repeat units follow at residues 2–31, 33–64, 84–122, 128–159, and 169–201; these read ELIT…AAVE, LPTF…IRLL, ANAR…EIPV, LIPQ…ICQD, and SNEI…LNSL. Serine 12 bears the Phosphoserine mark. The Importin N-terminal domain maps to 21–100; the sequence is AQKFLERAAV…KNYVLQTLGT (80 aa). Lysine 210 carries the post-translational modification N6-acetyllysine. 14 HEAT repeats span residues 211-246, 252-301, 313-359, 363-393, 401-437, 448-484, 499-536, 543-591, 599-638, 643-680, 685-723, 731-775, 785-828, and 830-872; these read ESER…IMSL, ETYM…EAAE, YAKG…TCCE, VPHV…GSIL, LKPL…ICEL, LAPL…YEAA, SSSF…EIVK, YPAV…QNVL, ALQI…VEVL, LKYM…CRAL, LPFC…TLAI, LEVV…VQGL, DVML…CTAF, and KDVL…RKLK. Residues 285-461 form an essential for high affinity interaction with RPL23A region; the sequence is VCDEEMDLAI…LQCLIEGLSA (177 aa). The IAB-binding stretch occupies residues 328–341; it reads TLTKQDENDDDDDW. Residues 333 to 418 are ran-GTP binding; it reads DENDDDDDWN…MPTLIELMKD (86 aa). Lysine 834 and lysine 866 each carry N6-acetyllysine.

The protein belongs to the importin beta family. Importin beta-1 subfamily. In terms of assembly, forms a complex with an importin alpha subunit. Interacts with XPO1. Forms a heterodimer with IPO7. The KPNB1/IPO7 heterodimer interacts with H1 histone. Interacts with SNUPN. Interacts with H2A, H2B, H3 and H4 histones. Component of an import snRNP complex composed of KPNB1, SNUPN, SMN1 and ZNF259. Component of a nuclear export receptor complex composed of KPNB1, Ran, SNUPN and XPO1. Interacts with SRY. Interacts with PRKCI/atypical protein kinase C iota. Interacts with KPNA2. Interacts with KPNA7. Interacts with SNAI1 (via zinc fingers) and SNAI2 (via zinc fingers). Interacts with SLC35G1 and STIM1. Interacts with DCAF8. Interacts with RAN. Interacts with NUMA1 (via C-terminus); this interaction is inhibited by RanGTP. Interacts with ZBED1/hDREF; required for nuclear import of ZBED1/hDREF. Interacts with SRP19. Interacts with RPL23A (via BIB domain), RPS7 and RPL5. Post-translationally, mono-ADP-ribosylated by PARP16.

It localises to the cytoplasm. It is found in the nucleus envelope. Functionally, functions in nuclear protein import, either in association with an adapter protein, like an importin-alpha subunit, which binds to nuclear localization signals (NLS) in cargo substrates, or by acting as autonomous nuclear transport receptor. Acting autonomously, serves itself as NLS receptor. Docking of the importin/substrate complex to the nuclear pore complex (NPC) is mediated by KPNB1 through binding to nucleoporin FxFG repeats and the complex is subsequently translocated through the pore by an energy requiring, Ran-dependent mechanism. At the nucleoplasmic side of the NPC, Ran binds to importin-beta and the three components separate and importin-alpha and -beta are re-exported from the nucleus to the cytoplasm where GTP hydrolysis releases Ran from importin. The directionality of nuclear import is thought to be conferred by an asymmetric distribution of the GTP- and GDP-bound forms of Ran between the cytoplasm and nucleus. Mediates autonomously the nuclear import of ribosomal proteins RPL23A, RPS7 and RPL5. In association with IPO7, mediates the nuclear import of H1 histone. In vitro, mediates nuclear import of H2A, H2B, H3 and H4 histones. Imports MRTFA, SNAI1 and PRKCI into the nucleus. This chain is Importin subunit beta-1 (Kpnb1), found in Rattus norvegicus (Rat).